Consider the following 236-residue polypeptide: Ureidoacrylate amidohydrolase RutB (236 aa).

The active-site Proton acceptor is Asp-24. Lys-133 is a catalytic residue. The active-site Nucleophile is Cys-166.

This sequence belongs to the isochorismatase family. RutB subfamily.

It carries out the reaction (Z)-3-ureidoacrylate + H2O + H(+) = (Z)-3-aminoacrylate + NH4(+) + CO2. The catalysed reaction is (Z)-3-ureidoacrylate + H2O = (Z)-3-aminoacrylate + carbamate + H(+). The enzyme catalyses (Z)-2-methylureidoacrylate + H2O + H(+) = (Z)-2-methylaminoacrylate + NH4(+) + CO2. Its function is as follows. Hydrolyzes ureidoacrylate to form aminoacrylate and carbamate. The carbamate hydrolyzes spontaneously, thereby releasing one of the nitrogen atoms of the pyrimidine ring as ammonia and one of its carbon atoms as CO2. The polypeptide is Ureidoacrylate amidohydrolase RutB (Klebsiella pneumoniae (strain 342)).